The chain runs to 559 residues: DNA primase (559 aa).

The CHC2-type zinc-finger motif lies at 37–61 (CPFHEERSASFSVNQIKGFYHCFGC). Residues 246 to 327 (KQVIVTEGYL…RGGVILFENN (82 aa)) form the Toprim domain. Mg(2+) contacts are provided by glutamate 252, aspartate 296, and aspartate 298.

The protein belongs to the DnaG primase family. As to quaternary structure, monomer. The C-terminal domain DnaB-binding domain exists as a dimer in solution. Interacts with DnaB via its C-terminal domain (residues 415-559 of DnaG); up to 3 DnaG fragments bind to a DnaB hexamer. The cofactor is Zn(2+). Requires Mg(2+) as cofactor.

It carries out the reaction ssDNA + n NTP = ssDNA/pppN(pN)n-1 hybrid + (n-1) diphosphate.. Functionally, RNA polymerase that catalyzes the synthesis of short RNA molecules used as primers for DNA polymerase during DNA replication. Stimulates the 5'-3' DNA helicase activity of DnaB. The sequence is that of DNA primase from Helicobacter pylori (strain ATCC 700392 / 26695) (Campylobacter pylori).